The sequence spans 370 residues: tRNA-specific 2-thiouridylase MnmA (370 aa).

Residues 10–17 and M36 each bind ATP; that span reads AMSGGVDS. C111 (nucleophile) is an active-site residue. A disulfide bridge links C111 with C209. Residue G135 coordinates ATP. Residues 159–161 are interaction with tRNA; that stretch reads KDQ. C209 serves as the catalytic Cysteine persulfide intermediate.

This sequence belongs to the MnmA/TRMU family.

The protein resides in the cytoplasm. It catalyses the reaction S-sulfanyl-L-cysteinyl-[protein] + uridine(34) in tRNA + AH2 + ATP = 2-thiouridine(34) in tRNA + L-cysteinyl-[protein] + A + AMP + diphosphate + H(+). Functionally, catalyzes the 2-thiolation of uridine at the wobble position (U34) of tRNA, leading to the formation of s(2)U34. In Koribacter versatilis (strain Ellin345), this protein is tRNA-specific 2-thiouridylase MnmA.